Here is a 186-residue protein sequence, read N- to C-terminus: Ribosome-recycling factor (186 aa).

This sequence belongs to the RRF family.

The protein localises to the cytoplasm. In terms of biological role, responsible for the release of ribosomes from messenger RNA at the termination of protein biosynthesis. May increase the efficiency of translation by recycling ribosomes from one round of translation to another. This chain is Ribosome-recycling factor, found in Methylibium petroleiphilum (strain ATCC BAA-1232 / LMG 22953 / PM1).